We begin with the raw amino-acid sequence, 400 residues long: Homoserine O-acetyltransferase (400 aa).

The AB hydrolase-1 domain occupies 64–374 (NAILVCHALT…DKGHDAFLLD (311 aa)). The active-site Nucleophile is the Ser-169. Arg-239 is a binding site for substrate. Residues Asp-335 and His-368 contribute to the active site. Asp-369 lines the substrate pocket.

Belongs to the AB hydrolase superfamily. MetX family. Homodimer.

The protein localises to the cytoplasm. It catalyses the reaction L-homoserine + acetyl-CoA = O-acetyl-L-homoserine + CoA. It functions in the pathway amino-acid biosynthesis; L-methionine biosynthesis via de novo pathway; O-acetyl-L-homoserine from L-homoserine: step 1/1. In terms of biological role, transfers an acetyl group from acetyl-CoA to L-homoserine, forming acetyl-L-homoserine. The polypeptide is Homoserine O-acetyltransferase (Rhodopseudomonas palustris (strain ATCC BAA-98 / CGA009)).